We begin with the raw amino-acid sequence, 217 residues long: UPF0502 protein KPK_3478 (217 aa).

It belongs to the UPF0502 family.

This is UPF0502 protein KPK_3478 from Klebsiella pneumoniae (strain 342).